The sequence spans 314 residues: Ornithine carbamoyltransferase (314 aa).

Carbamoyl phosphate-binding positions include 58 to 61 (STRT), glutamine 85, arginine 109, and 136 to 139 (HPAQ). Residues asparagine 169, aspartate 233, and 237–238 (SM) each bind L-ornithine. Carbamoyl phosphate contacts are provided by residues 273–274 (CL) and arginine 301.

The protein belongs to the aspartate/ornithine carbamoyltransferase superfamily. OTCase family.

The protein localises to the cytoplasm. The catalysed reaction is carbamoyl phosphate + L-ornithine = L-citrulline + phosphate + H(+). The protein operates within amino-acid degradation; L-arginine degradation via ADI pathway; carbamoyl phosphate from L-arginine: step 2/2. Functionally, reversibly catalyzes the transfer of the carbamoyl group from carbamoyl phosphate (CP) to the N(epsilon) atom of ornithine (ORN) to produce L-citrulline. This chain is Ornithine carbamoyltransferase, found in Staphylothermus marinus (strain ATCC 43588 / DSM 3639 / JCM 9404 / F1).